The sequence spans 210 residues: Putative Dihydrofolate reductase (210 aa).

Residues 4 to 184 enclose the DHFR domain; sequence TLYCVVAVDT…IFYMFETYIK (181 aa).

Belongs to the dihydrofolate reductase family.

It catalyses the reaction (6S)-5,6,7,8-tetrahydrofolate + NADP(+) = 7,8-dihydrofolate + NADPH + H(+). In Human herpesvirus 8 type P (isolate GK18) (HHV-8), this protein is Putative Dihydrofolate reductase (ORF2).